The primary structure comprises 286 residues: Bifunctional protein FolD (286 aa).

NADP(+) contacts are provided by residues 165 to 167 (GRS), Ser190, and Ile231.

The protein belongs to the tetrahydrofolate dehydrogenase/cyclohydrolase family. In terms of assembly, homodimer.

The enzyme catalyses (6R)-5,10-methylene-5,6,7,8-tetrahydrofolate + NADP(+) = (6R)-5,10-methenyltetrahydrofolate + NADPH. It carries out the reaction (6R)-5,10-methenyltetrahydrofolate + H2O = (6R)-10-formyltetrahydrofolate + H(+). It participates in one-carbon metabolism; tetrahydrofolate interconversion. Its function is as follows. Catalyzes the oxidation of 5,10-methylenetetrahydrofolate to 5,10-methenyltetrahydrofolate and then the hydrolysis of 5,10-methenyltetrahydrofolate to 10-formyltetrahydrofolate. In Thermodesulfovibrio yellowstonii (strain ATCC 51303 / DSM 11347 / YP87), this protein is Bifunctional protein FolD.